Here is a 221-residue protein sequence, read N- to C-terminus: Glutathione S-transferase Z1 (221 aa).

A GST N-terminal domain is found at 7 to 88; sequence EKLKLYSYWR…YLDEKYPEPP (82 aa). Residues 17-18, 17-22, Q46, 46-47, 59-60, V60, 72-73, Q112, and 116-118 contribute to the glutathione site; these read SS, SSCAHR, QF, TV, DS, and NLA. One can recognise a GST C-terminal domain in the interval 93–218; the sequence is DLHKRAVNYQ…LPEKQPDAPS (126 aa).

The protein belongs to the GST superfamily. Zeta family. As to quaternary structure, homodimer.

The protein resides in the cytoplasm. It localises to the cytosol. The catalysed reaction is RX + glutathione = an S-substituted glutathione + a halide anion + H(+). In terms of biological role, acts a maleylacetone isomerase. Also catalyzes the glutathione-dependent dehalogenation of dichloroacetic acid to glyoxylic acid. In vitro, possesses glutathione peroxidase activity toward cumene hydroperoxide and linoleic acid-13-hydroperoxide. The polypeptide is Glutathione S-transferase Z1 (GSTZ1) (Arabidopsis thaliana (Mouse-ear cress)).